The chain runs to 498 residues: Acetyl-coenzyme A carboxylase carboxyl transferase subunit beta, chloroplastic (498 aa).

The segment at 36–59 (SVNEDPIINDMDKDIPSGSDSDNS) is disordered. The region spanning 231–498 (LWVQCENCYG…FFPLNQNSIK (268 aa)) is the CoA carboxyltransferase N-terminal domain. Zn(2+) contacts are provided by C235, C238, C254, and C257. The segment at 235 to 257 (CENCYGLNYKRFLKSKMNICEHC) adopts a C4-type zinc-finger fold.

This sequence belongs to the AccD/PCCB family. Acetyl-CoA carboxylase is a heterohexamer composed of biotin carboxyl carrier protein, biotin carboxylase and 2 subunits each of ACCase subunit alpha and ACCase plastid-coded subunit beta (accD). Zn(2+) serves as cofactor.

It is found in the plastid. The protein resides in the chloroplast stroma. It carries out the reaction N(6)-carboxybiotinyl-L-lysyl-[protein] + acetyl-CoA = N(6)-biotinyl-L-lysyl-[protein] + malonyl-CoA. It functions in the pathway lipid metabolism; malonyl-CoA biosynthesis; malonyl-CoA from acetyl-CoA: step 1/1. Functionally, component of the acetyl coenzyme A carboxylase (ACC) complex. Biotin carboxylase (BC) catalyzes the carboxylation of biotin on its carrier protein (BCCP) and then the CO(2) group is transferred by the transcarboxylase to acetyl-CoA to form malonyl-CoA. The chain is Acetyl-coenzyme A carboxylase carboxyl transferase subunit beta, chloroplastic from Morus indica (Mulberry).